The chain runs to 155 residues: 2-C-methyl-D-erythritol 2,4-cyclodiphosphate synthase (155 aa).

Positions 9 and 11 each coordinate a divalent metal cation. Residues 9–11 and 35–36 contribute to the 4-CDP-2-C-methyl-D-erythritol 2-phosphate site; these read DSH and HS. H43 contributes to the a divalent metal cation binding site. 57-59 provides a ligand contact to 4-CDP-2-C-methyl-D-erythritol 2-phosphate; it reads DIG.

Belongs to the IspF family. Homotrimer. A divalent metal cation serves as cofactor.

The catalysed reaction is 4-CDP-2-C-methyl-D-erythritol 2-phosphate = 2-C-methyl-D-erythritol 2,4-cyclic diphosphate + CMP. The protein operates within isoprenoid biosynthesis; isopentenyl diphosphate biosynthesis via DXP pathway; isopentenyl diphosphate from 1-deoxy-D-xylulose 5-phosphate: step 4/6. Its function is as follows. Involved in the biosynthesis of isopentenyl diphosphate (IPP) and dimethylallyl diphosphate (DMAPP), two major building blocks of isoprenoid compounds. Catalyzes the conversion of 4-diphosphocytidyl-2-C-methyl-D-erythritol 2-phosphate (CDP-ME2P) to 2-C-methyl-D-erythritol 2,4-cyclodiphosphate (ME-CPP) with a corresponding release of cytidine 5-monophosphate (CMP). This is 2-C-methyl-D-erythritol 2,4-cyclodiphosphate synthase from Koribacter versatilis (strain Ellin345).